Consider the following 573-residue polypeptide: PCNA-interacting partner (573 aa).

2 disordered regions span residues 470 to 505 (VGKA…SKGK) and 531 to 560 (PKVP…RGKL).

The protein belongs to the PARI family. In terms of assembly, interacts with RAD51 and PCNA. Interacts with PARP1. Interacts with TASOR. In terms of tissue distribution, expressed in the ovary, Sertoli cells of the testis and in granular cells within the cerebellum.

The protein localises to the cytoplasm. It is found in the nucleus. Its function is as follows. Required to suppress inappropriate homologous recombination, thereby playing a central role DNA repair and in the maintenance of genomic stability. Antagonizes homologous recombination by interfering with the formation of the RAD51-DNA homologous recombination structure. Binds single-strand DNA and poly(A) homopolymers. Positively regulate the poly(ADP-ribosyl)ation activity of PARP1; however such function may be indirect. This chain is PCNA-interacting partner (Parpbp), found in Mus musculus (Mouse).